A 687-amino-acid polypeptide reads, in one-letter code: Glycine--tRNA ligase beta subunit (687 aa).

This sequence belongs to the class-II aminoacyl-tRNA synthetase family. Tetramer of two alpha and two beta subunits.

The protein localises to the cytoplasm. It catalyses the reaction tRNA(Gly) + glycine + ATP = glycyl-tRNA(Gly) + AMP + diphosphate. This chain is Glycine--tRNA ligase beta subunit, found in Citrifermentans bemidjiense (strain ATCC BAA-1014 / DSM 16622 / JCM 12645 / Bem) (Geobacter bemidjiensis).